The following is a 365-amino-acid chain: Glucan endo-1,3-beta-glucosidase, basic vacuolar isoform (365 aa).

The signal sequence occupies residues 1 to 32; sequence MSTLHKHNTPQMAAITLLGLLLVASSIEIAGA. Glutamate 128 (proton donor) is an active-site residue. Glutamate 273 functions as the Nucleophile in the catalytic mechanism. The propeptide at 349–365 is removed in mature form; the sequence is VSGSVETNATASLISEI. N-linked (GlcNAc...) asparagine glycosylation occurs at asparagine 356.

This sequence belongs to the glycosyl hydrolase 17 family.

It localises to the vacuole. It carries out the reaction Hydrolysis of (1-&gt;3)-beta-D-glucosidic linkages in (1-&gt;3)-beta-D-glucans.. Implicated in the defense of plants against pathogens. The chain is Glucan endo-1,3-beta-glucosidase, basic vacuolar isoform (GN2) from Nicotiana plumbaginifolia (Leadwort-leaved tobacco).